The following is a 473-amino-acid chain: Glutamate--tRNA ligase 2 (473 aa).

A 'HIGH' region motif is present at residues 11 to 21 (PSPTGYLHIGG). The span at 113-133 (KARAEGRPPRYDGRWRDRDPS) shows a compositional bias: basic and acidic residues. Residues 113–136 (KARAEGRPPRYDGRWRDRDPSEAP) are disordered. Residues 240 to 244 (KLSKR) carry the 'KMSKS' region motif. Residue Lys243 participates in ATP binding.

Belongs to the class-I aminoacyl-tRNA synthetase family. Glutamate--tRNA ligase type 1 subfamily. In terms of assembly, monomer.

The protein localises to the cytoplasm. The catalysed reaction is tRNA(Glu) + L-glutamate + ATP = L-glutamyl-tRNA(Glu) + AMP + diphosphate. Functionally, catalyzes the attachment of glutamate to tRNA(Glu) in a two-step reaction: glutamate is first activated by ATP to form Glu-AMP and then transferred to the acceptor end of tRNA(Glu). This Brucella abortus (strain S19) protein is Glutamate--tRNA ligase 2.